The chain runs to 131 residues: Holo-[acyl-carrier-protein] synthase (131 aa).

Mg(2+)-binding residues include D9 and E58.

Belongs to the P-Pant transferase superfamily. AcpS family. Mg(2+) is required as a cofactor.

The protein localises to the cytoplasm. The catalysed reaction is apo-[ACP] + CoA = holo-[ACP] + adenosine 3',5'-bisphosphate + H(+). Transfers the 4'-phosphopantetheine moiety from coenzyme A to a Ser of acyl-carrier-protein. The protein is Holo-[acyl-carrier-protein] synthase of Salmonella arizonae (strain ATCC BAA-731 / CDC346-86 / RSK2980).